The chain runs to 368 residues: Alanine racemase (368 aa).

The Proton acceptor; specific for D-alanine role is filled by Lys-40. An N6-(pyridoxal phosphate)lysine modification is found at Lys-40. Arg-134 is a substrate binding site. Tyr-263 functions as the Proton acceptor; specific for L-alanine in the catalytic mechanism. Met-310 serves as a coordination point for substrate.

This sequence belongs to the alanine racemase family. The cofactor is pyridoxal 5'-phosphate.

It carries out the reaction L-alanine = D-alanine. It participates in amino-acid biosynthesis; D-alanine biosynthesis; D-alanine from L-alanine: step 1/1. Its function is as follows. Catalyzes the interconversion of L-alanine and D-alanine. May also act on other amino acids. The chain is Alanine racemase (alr) from Listeria monocytogenes serotype 1/2a (strain 10403S).